We begin with the raw amino-acid sequence, 678 residues long: DNA ligase (678 aa).

NAD(+)-binding positions include 36-40 (DSEFD), 85-86 (SL), and Glu-117. Lys-119 (N6-AMP-lysine intermediate) is an active-site residue. Residues Arg-140, Glu-177, Lys-294, and Lys-318 each coordinate NAD(+). The Zn(2+) site is built by Cys-412, Cys-415, Cys-430, and Cys-436. A BRCT domain is found at 595 to 678 (IIDAPLLGKT…TWWQHYGNAV (84 aa)).

The protein belongs to the NAD-dependent DNA ligase family. LigA subfamily. Mg(2+) is required as a cofactor. It depends on Mn(2+) as a cofactor.

It catalyses the reaction NAD(+) + (deoxyribonucleotide)n-3'-hydroxyl + 5'-phospho-(deoxyribonucleotide)m = (deoxyribonucleotide)n+m + AMP + beta-nicotinamide D-nucleotide.. In terms of biological role, DNA ligase that catalyzes the formation of phosphodiester linkages between 5'-phosphoryl and 3'-hydroxyl groups in double-stranded DNA using NAD as a coenzyme and as the energy source for the reaction. It is essential for DNA replication and repair of damaged DNA. The protein is DNA ligase of Dichelobacter nodosus (strain VCS1703A).